The chain runs to 329 residues: MDAQSKEVDALVQKITGLHAAIAKLPSLSPSPDVDALFTDLVTACVPPSPVDVTKLAPEAQAMREGLIRLCSEAEGKLEAHYSDMLAAFDNPLDHLGVFPYYSNYINLSKLEYELLARYVPGGIAPARVAFIGSGPLPFSSYVLAARHLPDTVFDNYVPVRAANDRATRLFRADKDVGARMSFHTADVADLTDELATYDVVFLAALVGMAAEDKGQGDPHLGAHMADGAALVRSAHGARGFLYPIVDPQDIGRGGFEVLAVCHPDDDVVNSVIIAQKSKDMFANGPRNGCGGRYARGTVPVVSPPCRFGEMVADVTQKREEFAKAEVAF.

Belongs to the nicotianamine synthase (NAS)-like family.

The catalysed reaction is 3 S-adenosyl-L-methionine = nicotianamine + 3 S-methyl-5'-thioadenosine + 3 H(+). Its function is as follows. Synthesizes nicotianamine, a polyamine that is the first intermediate in the synthesis of the phytosiderophores of the mugineic acid type found in gramineae which serves as a sensor for the physiological iron status within the plant, and/or might be involved in the transport of iron. This chain is Probable nicotianamine synthase 7 (NAS7), found in Hordeum vulgare (Barley).